The primary structure comprises 468 residues: UDP-N-acetylmuramoyl-L-alanine--L-glutamate ligase (468 aa).

G122 to T128 serves as a coordination point for ATP.

Belongs to the MurCDEF family. MurD2 subfamily.

Its subcellular location is the cytoplasm. It carries out the reaction UDP-N-acetyl-alpha-D-muramoyl-L-alanine + L-glutamate + ATP = UDP-N-acetyl-alpha-D-muramoyl-L-alanyl-L-glutamate + ADP + phosphate + H(+). It functions in the pathway cell wall biogenesis; peptidoglycan biosynthesis. Functionally, cell wall formation. Catalyzes the addition of L-glutamate to the nucleotide precursor UDP-N-acetylmuramoyl-L-alanine. This chain is UDP-N-acetylmuramoyl-L-alanine--L-glutamate ligase, found in Xylella fastidiosa (strain 9a5c).